The sequence spans 390 residues: MKFVDEASILVVAGDGGNGCVSFRREKYIPKGGPDGGDGGDGGDVWMEADENLNTLIDYRFEKSFRAERGQNGASRDCTGKRGKDVTIKVPVGTRVIDQGTGETMGDMTKHGQRLLVAKGGWHGLGNTRFKSSVNRTPRQKTNGTPGDKRELLLELMLLADVGMLGMPNAGKSTFIRAVSAAKPKVADYPFTTLVPSLGVVRMDNEKSFVVADIPGLIEGAAEGAGLGIRFLKHLERCRVLLHLIDIDPIDGTDPVENARIIISELEKYSQDLAAKPRWLVFNKIDLLDKAEAEEKAKAIAEALGWEDKYYLISAASGLGVKDLCWDVMTFILENPVVQAEEAKQPEKVEFMWDDYHRQQLEEIAEEDDEDWDDDWDEDDEEGVEFIYKR.

Residues 1–159 (MKFVDEASIL…RELLLELMLL (159 aa)) form the Obg domain. Positions 127–147 (NTRFKSSVNRTPRQKTNGTPG) are disordered. Over residues 129 to 145 (RFKSSVNRTPRQKTNGT) the composition is skewed to polar residues. The OBG-type G domain maps to 160–333 (ADVGMLGMPN…LCWDVMTFIL (174 aa)). GTP-binding positions include 166–173 (GMPNAGKS), 191–195 (FTTLV), 213–216 (DIPG), 283–286 (NKID), and 314–316 (SAA). The Mg(2+) site is built by Ser173 and Thr193.

The protein belongs to the TRAFAC class OBG-HflX-like GTPase superfamily. OBG GTPase family. As to quaternary structure, monomer. It depends on Mg(2+) as a cofactor.

The protein resides in the cytoplasm. An essential GTPase which binds GTP, GDP and possibly (p)ppGpp with moderate affinity, with high nucleotide exchange rates and a fairly low GTP hydrolysis rate. Plays a role in control of the cell cycle, stress response, ribosome biogenesis and in those bacteria that undergo differentiation, in morphogenesis control. This chain is GTPase Obg, found in Shigella sonnei (strain Ss046).